The primary structure comprises 23 residues: Alyteserin-1d (23 aa).

Asn23 carries the post-translational modification Asparagine amide.

As to expression, expressed by the skin glands.

The protein resides in the secreted. Its subcellular location is the target cell membrane. In terms of biological role, antibacterial peptide with amphipathic alpha-helical structure. Shows selective growth inhibitory activity against the Gram-negative bacteria E.coli (MIC=25 uM) Has a weak hemolytic activity against human erythrocytes (LC(50)&gt;100 uM). Is very weakly active against S.aureus (MIC=200 uM). This chain is Alyteserin-1d, found in Alytes obstetricans (Common midwife toad).